The chain runs to 183 residues: Ubiquinol-cytochrome c reductase iron-sulfur subunit (183 aa).

The helical transmembrane segment at 21 to 41 (LIYGTTAVGAVGVALAVWPFI) threads the bilayer. The Rieske domain maps to 88–181 (IVVARAVDPA…YAFTDDTTVL (94 aa)). Positions 121, 123, 145, and 148 each coordinate [2Fe-2S] cluster. Residues C126 and C147 are joined by a disulfide bond.

The protein belongs to the Rieske iron-sulfur protein family. The main subunits of complex b-c1 are: cytochrome b, cytochrome c1 and the Rieske protein. [2Fe-2S] cluster is required as a cofactor.

The protein localises to the cell inner membrane. The catalysed reaction is a quinol + 2 Fe(III)-[cytochrome c](out) = a quinone + 2 Fe(II)-[cytochrome c](out) + 2 H(+)(out). Its function is as follows. Component of the ubiquinol-cytochrome c reductase complex (complex III or cytochrome b-c1 complex), which is a respiratory chain that generates an electrochemical potential coupled to ATP synthesis. This chain is Ubiquinol-cytochrome c reductase iron-sulfur subunit (petA), found in Rhodospirillum rubrum.